A 198-amino-acid polypeptide reads, in one-letter code: Putative glutathione S-transferase alpha-2 (198 aa).

An N-acetylserine modification is found at serine 2. Residues 5–81 form the GST N-terminal domain; that stretch reads SVPSLTYFQG…YIAKKHNFMG (77 aa). Residues tyrosine 11, arginine 45, 52–53, and 65–66 each bind glutathione; these read QL and QS. One can recognise a GST C-terminal domain in the interval 83 to 198; that stretch reads NLEEEFLVDQ…YIKERPETKF (116 aa).

Belongs to the GST superfamily. Alpha family.

It carries out the reaction RX + glutathione = an S-substituted glutathione + a halide anion + H(+). Functionally, conjugation of reduced glutathione to a wide number of exogenous and endogenous hydrophobic electrophiles. The sequence is that of Putative glutathione S-transferase alpha-2 (gsta2-1) from Dictyostelium discoideum (Social amoeba).